Consider the following 416-residue polypeptide: Protein P47 (416 aa).

Belongs to the TULIP P47 family. As to quaternary structure, part of a crude toxin extract that includes BoNTA2/NTNH, P47, OrfX2 and OrfX3; OrfX1 was not detected.

Its function is as follows. Part of a botulinum neurotoxin type A2 (BoNT) locus; may be part of a progenitor toxin complex required to protect BoNT during its passage through the host gastrointestinal tract. In Clostridium botulinum (strain Kyoto / Type A2), this protein is Protein P47.